The following is a 719-amino-acid chain: MVYQGNRITVTMLEDGIANMQYNAENESVNKFDTETNKQFAEVVNALEKADDIKGLIVTSSKGVFIAGADITEFVASFKQSEEEIKDWVININDAFNRFEDLPFPKVAAINGAALGGGCEMTLVCEYRVMSDKAIIGLPETQLGIFPGFGGTVRSTRVIGIDNALELIATGTPKKALDALKLGLVDATVAADDLQDAAIDLVKKCISDELDWQAKREEKLVPVKLNQLEQAMAFNSAKGMIFAKANPKQYPAPALAIAAIEKHVNLPRDKAIEVEAAGFAKAAKTPQAESLVGLFLSDQLVKKLAKQHSKKAHDINEAAVLGAGIMGGGIAYQAASKGLPIIMKDIKSEQLDLGMGEASKLLGKMVDRGKITPAKMGETLSRIRPTLNYGDFAETDIVIEAVVENPNVKRAVLKEVEGLVKDDCILASNTSTISITFLAEALERPENFVGMHFFNPVNRMPLVEVIRGEKSSEEAISTTVALATKMGKVPVVVNDCPGFLVNRVLFPYFGAFDLLLKQGADFAHVDKVMEKFGWPMGPAYLIDVVGLDTGVHGAEVMAEGFPDRMKPDYKGAIEHLYENKRLGQKNGVGFYKYEMDKRGKPKKVADEATYELLKTTTDSDKQTFEDQAIIDRTMLAFCNETVRCLEDNIVSTPSEADMAMIMGVGFPPFRGGPCRYIDQMGLDNYLALCEKYAYLGKAYEAPQKIRDMAAAGETFYATA.

The segment at 1–190 (MVYQGNRITV…KLGLVDATVA (190 aa)) is enoyl-CoA hydratase/isomerase. Asp-298 is a binding site for substrate. The tract at residues 313–719 (HDINEAAVLG…AAGETFYATA (407 aa)) is 3-hydroxyacyl-CoA dehydrogenase. NAD(+)-binding positions include Met-326, Asp-345, 402–404 (VVE), Lys-409, and Ser-431. The active-site For 3-hydroxyacyl-CoA dehydrogenase activity is His-452. Asn-455 is a binding site for NAD(+). Substrate is bound at residue Asn-502.

It in the N-terminal section; belongs to the enoyl-CoA hydratase/isomerase family. This sequence in the C-terminal section; belongs to the 3-hydroxyacyl-CoA dehydrogenase family. As to quaternary structure, heterotetramer of two alpha chains (FadB) and two beta chains (FadA).

It catalyses the reaction a (3S)-3-hydroxyacyl-CoA + NAD(+) = a 3-oxoacyl-CoA + NADH + H(+). The enzyme catalyses a (3S)-3-hydroxyacyl-CoA = a (2E)-enoyl-CoA + H2O. The catalysed reaction is a 4-saturated-(3S)-3-hydroxyacyl-CoA = a (3E)-enoyl-CoA + H2O. It carries out the reaction (3S)-3-hydroxybutanoyl-CoA = (3R)-3-hydroxybutanoyl-CoA. It catalyses the reaction a (3Z)-enoyl-CoA = a 4-saturated (2E)-enoyl-CoA. The enzyme catalyses a (3E)-enoyl-CoA = a 4-saturated (2E)-enoyl-CoA. Its pathway is lipid metabolism; fatty acid beta-oxidation. Functionally, involved in the aerobic and anaerobic degradation of long-chain fatty acids via beta-oxidation cycle. Catalyzes the formation of 3-oxoacyl-CoA from enoyl-CoA via L-3-hydroxyacyl-CoA. It can also use D-3-hydroxyacyl-CoA and cis-3-enoyl-CoA as substrate. This chain is Fatty acid oxidation complex subunit alpha, found in Psychrobacter cryohalolentis (strain ATCC BAA-1226 / DSM 17306 / VKM B-2378 / K5).